The primary structure comprises 323 residues: MTMALASSKAFSSIFNTLSPINQSKFVLACSGSNHVDVIDRRRRIMIFGSSLALTSSLLGSNQQRLPMESAIALEQFKEKEEELEEEEERNVNLFQKTSPSVVYIEAIELPKTSSGDILTDEENGKIEGTGSGFVWDKLGHIVTNYHVIAKLATDQFGLQRCKVSLVDAKGTRFSKEGKIVGLDPDNDLAVLKIETEGRELNPVVLGTSNDLRVGQSCFAIGNPYGYENTLTIGVVSGLGREIPSPNGKSISEAIQTDADINSGNSGGPLLDSYGHTIGVNTATFTRKGSGMSSGVNFAIPIDTVVRTVPYLIVYGTAYRDRF.

The transit peptide at 1 to 28 (MTMALASSKAFSSIFNTLSPINQSKFVL) directs the protein to the chloroplast. The transit peptide at 29–73 (ACSGSNHVDVIDRRRRIMIFGSSLALTSSLLGSNQQRLPMESAIA) directs the protein to the thylakoid. Catalysis depends on charge relay system residues His147, Asp188, and Ser266. Residues 186–283 (DNDLAVLKIE…YGHTIGVNTA (98 aa)) form a serine protease region.

It belongs to the peptidase S1C family.

The protein localises to the plastid. The protein resides in the chloroplast thylakoid lumen. In terms of biological role, probable serine protease. This chain is Protease Do-like 5, chloroplastic (DEGP5), found in Arabidopsis thaliana (Mouse-ear cress).